Reading from the N-terminus, the 921-residue chain is MKLDPKVYQLEFFREKGFTRKQCRVCGEYFWTLNPDQEHCNDAPCVEYYFWELPRVRGLSVRDARRKFIEFFKRHGHEYVEPRPVVARWREDLYLTIASIVAFQPHVTSGIVPPPANPLVIVQPCIRLEDIDFVGLTIGRHLTSFEMGGHHAFNYPDKTVYWKEETVRFAFEFFTKELGIPEDMVTFKESWWEGGGNAGPSFEVTVGGLELATLVFMQYRVVDGKYEPMDIRVVDTGYGIERIAWFSQDVPTAFHAIYGELLDEFRKLLGVAEPPRELLWGAARAAGRLDPEDPESVERYYQVVAERAGLSIREARELLGREAALYTLLDHTKTIALMLGDGIVPSNTGEGYLARLVIRRALRTLRRLGADIELAVLVERQARYWGADYYPRLLSHLDYILRVVRLEEERYSKTLERGLREVTKLLKRKKKLSIDDLITLYDSHGVPPDMVAEAASKLGVNVDVPHNFYALVAKKHGASGAVAREVEEKPKLPRDIEEWARGFPATRRLFHENPYAREFTANLLGVRGSHVILDATLFYPTGGGQLHDTGVLRLCGEEYRVLRVEKVGDVVVHVLDREPSCSSGEAWGRIDWDRRYRLMRHHTAVHVLLGAARRVLGDHVWQAGAEKTPEKARLDITHYELPSREEIRKIEELANSAILARIHVDIEEIDRNTAEKLYGFRIYQGGVPMTPRLRIVRIGDWDVEACFGTHVANTAEIGAIKIVNVEKLQDGVVRFEIVAGSEVARYAASLEDKLDTIASIVGGGRGEAVKRVEKLAEELKEAKRQVSRLRSFLADMLVKSVKATAKSIDGVKVYVMTEELPDENIYREVMLKLSREEPDSITIAVIRRGEDLLMEIGAGSKAAKRVDLRAVAKQLASKGLRGGGKPSHITLYGRGLAEKASKVASEVVEVIASLVSRAGTA.

The Zn(2+) site is built by His602, His606, Cys706, and His710.

Belongs to the class-II aminoacyl-tRNA synthetase family. Requires Zn(2+) as cofactor.

It is found in the cytoplasm. The catalysed reaction is tRNA(Ala) + L-alanine + ATP = L-alanyl-tRNA(Ala) + AMP + diphosphate. Functionally, catalyzes the attachment of alanine to tRNA(Ala) in a two-step reaction: alanine is first activated by ATP to form Ala-AMP and then transferred to the acceptor end of tRNA(Ala). Also edits incorrectly charged Ser-tRNA(Ala) and Gly-tRNA(Ala) via its editing domain. This chain is Alanine--tRNA ligase, found in Hyperthermus butylicus (strain DSM 5456 / JCM 9403 / PLM1-5).